Here is a 610-residue protein sequence, read N- to C-terminus: UvrABC system protein C (610 aa).

One can recognise a GIY-YIG domain in the interval 16-94 (SQPGVYRMYD…IKLYQPRYNV (79 aa)). The 36-residue stretch at 204 to 239 (DQVLTQLIARMEKASQDLAFEEAARIRDQIQAVRRV) folds into the UVR domain.

Belongs to the UvrC family. In terms of assembly, interacts with UvrB in an incision complex.

It localises to the cytoplasm. Its function is as follows. The UvrABC repair system catalyzes the recognition and processing of DNA lesions. UvrC both incises the 5' and 3' sides of the lesion. The N-terminal half is responsible for the 3' incision and the C-terminal half is responsible for the 5' incision. The sequence is that of UvrABC system protein C from Salmonella gallinarum (strain 287/91 / NCTC 13346).